Reading from the N-terminus, the 414-residue chain is Imidazolonepropionase (414 aa).

Residues His73 and His75 each contribute to the Fe(3+) site. Zn(2+)-binding residues include His73 and His75. The 4-imidazolone-5-propanoate site is built by Arg82, Tyr145, and His178. Tyr145 provides a ligand contact to N-formimidoyl-L-glutamate. His249 provides a ligand contact to Fe(3+). Zn(2+) is bound at residue His249. Gln252 provides a ligand contact to 4-imidazolone-5-propanoate. Position 324 (Asp324) interacts with Fe(3+). Asp324 is a binding site for Zn(2+). N-formimidoyl-L-glutamate is bound by residues Asn326 and Gly328. 4-imidazolone-5-propanoate is bound at residue Ser329.

It belongs to the metallo-dependent hydrolases superfamily. HutI family. Requires Zn(2+) as cofactor. Fe(3+) serves as cofactor.

The protein localises to the cytoplasm. It catalyses the reaction 4-imidazolone-5-propanoate + H2O = N-formimidoyl-L-glutamate. It functions in the pathway amino-acid degradation; L-histidine degradation into L-glutamate; N-formimidoyl-L-glutamate from L-histidine: step 3/3. Functionally, catalyzes the hydrolytic cleavage of the carbon-nitrogen bond in imidazolone-5-propanoate to yield N-formimidoyl-L-glutamate. It is the third step in the universal histidine degradation pathway. The chain is Imidazolonepropionase from Shewanella denitrificans (strain OS217 / ATCC BAA-1090 / DSM 15013).